The following is a 207-amino-acid chain: Interleukin-6 (207 aa).

The N-terminal stretch at 1 to 20 (MNSLSTSAFSLGLLLVMATA) is a signal peptide. Cys-67 and Cys-73 are disulfide-bonded. Ser-76 is subject to Phosphoserine. A disulfide bond links Cys-96 and Cys-106.

This sequence belongs to the IL-6 superfamily. Component of a hexamer of two molecules each of IL6, IL6R and IL6ST; first binds to IL6R to associate with the signaling subunit IL6ST. Interacts with IL6R (via the N-terminal ectodomain); this interaction may be affected by IL6R-binding with SORL1, hence decreasing IL6 cis signaling. Interacts with SORL1 (via the N-terminal ectodomain); this interaction leads to IL6 internalization and lysosomal degradation. May form a trimeric complex with the soluble SORL1 ectodomain and soluble IL6R receptor; this interaction might stabilize circulating IL6, hence promoting IL6 trans signaling.

Its subcellular location is the secreted. In terms of biological role, cytokine with a wide variety of biological functions in immunity, tissue regeneration, and metabolism. Binds to IL6R, then the complex associates to the signaling subunit IL6ST/gp130 to trigger the intracellular IL6-signaling pathway. The interaction with the membrane-bound IL6R and IL6ST stimulates 'classic signaling', whereas the binding of IL6 and soluble IL6R to IL6ST stimulates 'trans-signaling'. Alternatively, 'cluster signaling' occurs when membrane-bound IL6:IL6R complexes on transmitter cells activate IL6ST receptors on neighboring receiver cells. IL6 is a potent inducer of the acute phase response. Rapid production of IL6 contributes to host defense during infection and tissue injury, but excessive IL6 synthesis is involved in disease pathology. In the innate immune response, is synthesized by myeloid cells, such as macrophages and dendritic cells, upon recognition of pathogens through toll-like receptors (TLRs) at the site of infection or tissue injury. In the adaptive immune response, is required for the differentiation of B cells into immunoglobulin-secreting cells. Plays a major role in the differentiation of CD4(+) T cell subsets. Essential factor for the development of T follicular helper (Tfh) cells that are required for the induction of germinal-center formation. Required to drive naive CD4(+) T cells to the Th17 lineage. Also required for proliferation of myeloma cells and the survival of plasmablast cells. Its function is as follows. Acts as an essential factor in bone homeostasis and on vessels directly or indirectly by induction of VEGF, resulting in increased angiogenesis activity and vascular permeability. Induces, through 'trans-signaling' and synergistically with IL1B and TNF, the production of VEGF. Involved in metabolic controls, is discharged into the bloodstream after muscle contraction increasing lipolysis and improving insulin resistance. 'Trans-signaling' in central nervous system also regulates energy and glucose homeostasis. Mediates, through GLP-1, crosstalk between insulin-sensitive tissues, intestinal L cells and pancreatic islets to adapt to changes in insulin demand. Also acts as a myokine. Plays a protective role during liver injury, being required for maintenance of tissue regeneration. Also has a pivotal role in iron metabolism by regulating HAMP/hepcidin expression upon inflammation or bacterial infection. Through activation of IL6ST-YAP-NOTCH pathway, induces inflammation-induced epithelial regeneration. In Canis lupus familiaris (Dog), this protein is Interleukin-6 (IL6).